A 1319-amino-acid polypeptide reads, in one-letter code: DNA (cytosine-5)-methyltransferase CMT2 (1319 aa).

The segment covering 1–15 has biased composition (pro residues); the sequence is METPPPDPVSPPPPA. Disordered stretches follow at residues 1 to 34, 142 to 189, 265 to 302, and 442 to 468; these read METPPPDPVSPPPPAADEGSPGGDDGAEDAGGFS, ALDS…VASS, SAASSMPLNQNGDSSRASKRRVADSRKSRSSEGSKLPA, and KSRVVSKTPQGRGRRSPQPPKTQRART. Residues 266-279 are compositionally biased toward polar residues; that stretch reads AASSMPLNQNGDSS. Residues 285-296 are compositionally biased toward basic and acidic residues; that stretch reads RVADSRKSRSSE. Residues 602–719 form the BAH domain; sequence YTFCIGECAF…IDYSTFSTIE (118 aa). Residues 758–1296 enclose the SAM-dependent MTase C5-type domain; the sequence is LSLLDLYCGC…YALAMAYLKK (539 aa). The 66-residue stretch at 863–928 folds into the Chromo domain; it reads FEVWKLVDIC…EGHRQRILPR (66 aa). Cysteine 941 is a catalytic residue.

The protein resides in the nucleus. The catalysed reaction is a 2'-deoxycytidine in DNA + S-adenosyl-L-methionine = a 5-methyl-2'-deoxycytidine in DNA + S-adenosyl-L-homocysteine + H(+). In terms of biological role, involved in CpXpG DNA methylation. This Oryza sativa subsp. japonica (Rice) protein is DNA (cytosine-5)-methyltransferase CMT2.